The primary structure comprises 43 residues: Potassium channel toxin gamma-KTx 4.2 (43 aa).

4 disulfides stabilise this stretch: Cys5-Cys23, Cys11-Cys34, Cys20-Cys39, and Cys24-Cys41.

The protein belongs to the ergtoxin family. Gamma-KTx 4 subfamily. In terms of tissue distribution, expressed by the venom gland.

The protein localises to the secreted. In terms of biological role, reversibly blocks Kv11/ERG potassium channels. This Centruroides noxius (Mexican scorpion) protein is Potassium channel toxin gamma-KTx 4.2.